We begin with the raw amino-acid sequence, 213 residues long: Imidazole glycerol phosphate synthase subunit HisH (213 aa).

A Glutamine amidotransferase type-1 domain is found at 4–213 (SIAIVDYGMG…LYRNFVHWNP (210 aa)). The Nucleophile role is filled by Cys83. Catalysis depends on residues His193 and Glu195.

In terms of assembly, heterodimer of HisH and HisF.

It localises to the cytoplasm. The catalysed reaction is 5-[(5-phospho-1-deoxy-D-ribulos-1-ylimino)methylamino]-1-(5-phospho-beta-D-ribosyl)imidazole-4-carboxamide + L-glutamine = D-erythro-1-(imidazol-4-yl)glycerol 3-phosphate + 5-amino-1-(5-phospho-beta-D-ribosyl)imidazole-4-carboxamide + L-glutamate + H(+). It carries out the reaction L-glutamine + H2O = L-glutamate + NH4(+). It participates in amino-acid biosynthesis; L-histidine biosynthesis; L-histidine from 5-phospho-alpha-D-ribose 1-diphosphate: step 5/9. IGPS catalyzes the conversion of PRFAR and glutamine to IGP, AICAR and glutamate. The HisH subunit catalyzes the hydrolysis of glutamine to glutamate and ammonia as part of the synthesis of IGP and AICAR. The resulting ammonia molecule is channeled to the active site of HisF. The protein is Imidazole glycerol phosphate synthase subunit HisH of Burkholderia pseudomallei (strain K96243).